The chain runs to 69 residues: Large ribosomal subunit protein uL29 (69 aa).

The protein belongs to the universal ribosomal protein uL29 family.

The polypeptide is Large ribosomal subunit protein uL29 (rpmC) (Lactococcus lactis subsp. lactis (strain IL1403) (Streptococcus lactis)).